The primary structure comprises 124 residues: Ribonuclease P protein component (124 aa).

This sequence belongs to the RnpA family. As to quaternary structure, consists of a catalytic RNA component (M1 or rnpB) and a protein subunit.

The enzyme catalyses Endonucleolytic cleavage of RNA, removing 5'-extranucleotides from tRNA precursor.. Its function is as follows. RNaseP catalyzes the removal of the 5'-leader sequence from pre-tRNA to produce the mature 5'-terminus. It can also cleave other RNA substrates such as 4.5S RNA. The protein component plays an auxiliary but essential role in vivo by binding to the 5'-leader sequence and broadening the substrate specificity of the ribozyme. This chain is Ribonuclease P protein component, found in Synechocystis sp. (strain ATCC 27184 / PCC 6803 / Kazusa).